Consider the following 821-residue polypeptide: Fibroblast growth factor receptor 2 (821 aa).

Positions 1-21 (MVSWGRFICLVVVTMATLSLA) are cleaved as a signal peptide. Residues 22-377 (RPSFSLVEDT…EITASPDYLE (356 aa)) lie on the Extracellular side of the membrane. Residues 25–125 (FSLVEDTTLE…ETWYFMVNVT (101 aa)) form the Ig-like C2-type 1 domain. C62 and C107 are disulfide-bonded. 2 N-linked (GlcNAc...) asparagine glycosylation sites follow: N83 and N123. Over residues 131–144 (GDDEDDTDGAEDFV) the composition is skewed to acidic residues. The disordered stretch occupies residues 131-151 (GDDEDDTDGAEDFVSENSNNK). 2 consecutive Ig-like C2-type domains span residues 154–247 (PYWT…YHLD) and 256–358 (PILQ…AWLT). Positions 161 to 178 (KMEKRLHAVPAANTVKFR) are heparin-binding. Residues C179 and C231 are joined by a disulfide bond. N-linked (GlcNAc...) asparagine glycosylation is found at N228, N241, N265, N297, N318, and N331. An intrachain disulfide couples C278 to C342. Residues 378–398 (IAIYCIGVFLIACMVVTVILC) traverse the membrane as a helical segment. Residues 399 to 821 (RMKNTTKKPD…YPHINGSVKT (423 aa)) are Cytoplasmic-facing. Phosphotyrosine; by autocatalysis is present on Y466. In terms of domain architecture, Protein kinase spans 481–770 (LTLGKPLGEG…LTLTTNEEYL (290 aa)). ATP-binding positions include 487–495 (LGEGCFGQV), K517, 565–567 (EYA), and N571. Phosphotyrosine; by autocatalysis is present on residues Y586 and Y588. The active-site Proton acceptor is the D626. Phosphotyrosine; by autocatalysis is present on residues Y656, Y657, and Y769. S780 carries the phosphoserine modification.

This sequence belongs to the protein kinase superfamily. Tyr protein kinase family. Fibroblast growth factor receptor subfamily. Monomer. Homodimer after ligand binding. Interacts predominantly with FGF1 and FGF2, but can also interact with FGF3, FGF4, FGF6, FGF7, FGF8, FGF9, FGF10, FGF17, FGF18 and FGF22 (in vitro). Ligand specificity is determined by tissue-specific expression of isoforms, and differences in the third Ig-like domain are crucial for ligand specificity. Isoform 1 has high affinity for FGF1 and FGF2, but low affinity for FGF7. Isoform 3 has high affinity for FGF1 and FGF7, and has much higher affinity for FGF7 than isoform 1 (in vitro). Affinity for fibroblast growth factors (FGFs) is increased by heparan sulfate glycosaminoglycans that function as coreceptors. Likewise, KLB increases the affinity for FGF19 and FGF21. Interacts with PLCG1, GRB2 and PAK4. Interacts with FLRT2. Post-translationally, autophosphorylated. Binding of FGF family members together with heparan sulfate proteoglycan or heparin promotes receptor dimerization and autophosphorylation on several tyrosine residues. Autophosphorylation occurs in trans between the two FGFR molecules present in the dimer. Phosphorylation at Tyr-769 is essential for interaction with PLCG1. N-glycosylated in the endoplasmic reticulum. The N-glycan chains undergo further maturation to an Endo H-resistant form in the Golgi apparatus. In terms of processing, ubiquitinated. FGFR2 is rapidly ubiquitinated after autophosphorylation, leading to internalization and degradation. Subject to degradation both in lysosomes and by the proteasome.

The protein resides in the cell membrane. It localises to the golgi apparatus. Its subcellular location is the cytoplasmic vesicle. It is found in the secreted. It catalyses the reaction L-tyrosyl-[protein] + ATP = O-phospho-L-tyrosyl-[protein] + ADP + H(+). Its activity is regulated as follows. Present in an inactive conformation in the absence of bound ligand. Ligand binding leads to dimerization and activation by autophosphorylation on tyrosine residues. Inhibited by ARQ 523 and ARQ 069; these compounds maintain the kinase in an inactive conformation and inhibit autophosphorylation. Tyrosine-protein kinase that acts as a cell-surface receptor for fibroblast growth factors and plays an essential role in the regulation of cell proliferation, differentiation, migration and apoptosis, and in the regulation of embryonic development. Required for normal embryonic patterning, trophoblast function, limb bud development, lung morphogenesis, osteogenesis and skin development. Plays an essential role in the regulation of osteoblast differentiation, proliferation and apoptosis, and is required for normal skeleton development. Promotes cell proliferation in keratinocytes and immature osteoblasts, but promotes apoptosis in differentiated osteoblasts. Phosphorylates PLCG1, FRS2 and PAK4. Ligand binding leads to the activation of several signaling cascades. Activation of PLCG1 leads to the production of the cellular signaling molecules diacylglycerol and inositol 1,4,5-trisphosphate. Phosphorylation of FRS2 triggers recruitment of GRB2, GAB1, PIK3R1 and SOS1, and mediates activation of RAS, MAPK1/ERK2, MAPK3/ERK1 and the MAP kinase signaling pathway, as well as of the AKT1 signaling pathway. FGFR2 signaling is down-regulated by ubiquitination, internalization and degradation. Mutations that lead to constitutive kinase activation or impair normal FGFR2 maturation, internalization and degradation lead to aberrant signaling. Over-expressed FGFR2 promotes activation of STAT1. The polypeptide is Fibroblast growth factor receptor 2 (FGFR2) (Homo sapiens (Human)).